Consider the following 791-residue polypeptide: mRNA 3'-end-processing protein RNA14 (791 aa).

HAT repeat units follow at residues 44 to 76, 78 to 112, 119 to 154, 165 to 198, 231 to 263, and 273 to 305; these read DNQE…YELN, DEKE…GVTD, KARG…FLQS, QKID…WENE, KSLK…LEKE, and VNDK…YLLV. Residues 379–388 show a composition bias toward basic and acidic residues; the sequence is IDPATDKDNI. Disordered regions lie at residues 379-449 and 725-745; these read IDPA…APSS and QKTR…KPEE. Positions 389–411 are enriched in acidic residues; the sequence is QEDDDDNEEEEEEENDNDNDNDN. The segment covering 427–442 has biased composition (low complexity); sequence NPNGGQNGSNSENNGE.

It is found in the nucleus. Its subcellular location is the cytoplasm. In terms of biological role, component of the cleavage factor IA (CFIA) complex, which is involved in the endonucleolytic cleavage during polyadenylation-dependent pre-mRNA 3'-end formation. In Candida albicans (strain SC5314 / ATCC MYA-2876) (Yeast), this protein is mRNA 3'-end-processing protein RNA14 (RNA14).